The following is a 1052-amino-acid chain: Protein argonaute 14 (1052 aa).

Positions 1–39 are enriched in gly residues; the sequence is MASRGGDGLVGGGRGPLGGRDGRGRGPAGGRGGGRGGGH. 2 disordered regions span residues 1–127 and 170–194; these read MASR…TPAV and GGRP…APPS. Low complexity predominate over residues 40–49; the sequence is PQQQQQQQPG. Gly residues-rich tracts occupy residues 50 to 59 and 66 to 81; these read YGRGDGGGRG and GVVG…GGRG. The segment covering 97–117 has biased composition (low complexity); it reads VRPAMAAAPAASTPGPVAVAA. Over residues 173-183 the composition is skewed to pro residues; sequence PAPPAAPPAPI. One can recognise a PAZ domain in the interval 394 to 510; it reads SVVEYVKNCL…LPMEVCTIVE (117 aa). A Piwi domain is found at 677-1009; it reads LLIVILPDVN…AAFRARYYDE (333 aa).

Belongs to the argonaute family. Ago subfamily. Expressed in seeds.

Functionally, probably involved in the RNA silencing pathway. May bind to short RNAs such as microRNAs (miRNAs) or short interfering RNAs (siRNAs), and represses the translation of mRNAs which are complementary to them. This Oryza sativa subsp. japonica (Rice) protein is Protein argonaute 14 (AGO14).